The following is a 174-amino-acid chain: Repair DNA polymerase X (174 aa).

The interval 42-51 is involved in ssDNA binding; that stretch reads REEKMLNDVD. 2 residues coordinate Mg(2+): aspartate 49 and aspartate 51. Cysteine 81 and cysteine 86 are disulfide-bonded. Residue aspartate 100 participates in Mg(2+) binding.

Belongs to the DNA polymerase type-X family. It depends on Mg(2+) as a cofactor.

Its subcellular location is the virion. It catalyses the reaction DNA(n) + a 2'-deoxyribonucleoside 5'-triphosphate = DNA(n+1) + diphosphate. In terms of biological role, error-prone polymerase lacking a proofreading 3'-5' exonuclease which catalyzes the gap-filling reaction during the DNA repair process. Specifically binds intermediates in the single-nucleotide base-excision repair process. Also catalyzes DNA polymerization with low nucleotide-insertion fidelity. Probably acts as a strategic DNA mutase, which gives rise to a rapid emergence of variants. Generates mismatched G-G pairs, in that case, the polymerase first binds the deoxynucleotide followed by mismatch formation. Together with the viral DNA ligase, fills the single nucleotide gaps generated by the AP endonuclease. Binds DNA with high affinity via the helix alphaE. The polypeptide is Repair DNA polymerase X (Ornithodoros (relapsing fever ticks)).